The sequence spans 50 residues: Photosystem II reaction center protein M (50 aa).

A helical membrane pass occupies residues 7 to 27; it reads GFIASLLFVGVPTIFLIGLFI.

It belongs to the PsbM family. In terms of assembly, PSII is composed of 1 copy each of membrane proteins PsbA, PsbB, PsbC, PsbD, PsbE, PsbF, PsbH, PsbI, PsbJ, PsbK, PsbL, PsbM, PsbT, PsbX, PsbY, Psb30/Ycf12, peripheral proteins PsbO, CyanoQ (PsbQ), PsbU, PsbV and a large number of cofactors. It forms dimeric complexes.

It localises to the cellular thylakoid membrane. In terms of biological role, one of the components of the core complex of photosystem II (PSII). PSII is a light-driven water:plastoquinone oxidoreductase that uses light energy to abstract electrons from H(2)O, generating O(2) and a proton gradient subsequently used for ATP formation. It consists of a core antenna complex that captures photons, and an electron transfer chain that converts photonic excitation into a charge separation. This subunit is found at the monomer-monomer interface. This Prochlorococcus marinus (strain MIT 9312) protein is Photosystem II reaction center protein M.